A 1081-amino-acid polypeptide reads, in one-letter code: Carbamoyl phosphate synthase large chain (1081 aa).

Positions 1–410 (MPKRTDIKTI…SFQKALRGLE (410 aa)) are carboxyphosphate synthetic domain. ATP is bound by residues Arg-129, Arg-176, Gly-182, Gly-183, Glu-215, Leu-217, Glu-222, Gly-248, Ile-249, His-250, Gln-292, and Glu-306. Residues 133-335 (KEAMTKIGLG…IAKVAAKLAV (203 aa)) enclose the ATP-grasp 1 domain. Mg(2+) is bound by residues Gln-292, Glu-306, and Asn-308. Residues Gln-292, Glu-306, and Asn-308 each contribute to the Mn(2+) site. Positions 411–558 (VGVDGLDEKS…YEAEHGECEA (148 aa)) are oligomerization domain. The interval 559–944 (DPTERKKIMV…ALFKSQLAAG (386 aa)) is carbamoyl phosphate synthetic domain. The ATP-grasp 2 domain maps to 683-878 (QKLLHDLGLR…LAKVAARCMA (196 aa)). ATP contacts are provided by Arg-719, Arg-758, Leu-760, Glu-765, Gly-790, Val-791, His-792, Ser-793, Gln-833, and Glu-849. Residues Gln-833, Glu-849, and Asn-851 each contribute to the Mg(2+) site. The Mn(2+) site is built by Gln-833, Glu-849, and Asn-851. Residues 945-1081 (SRLPEKGTVL…YDLQGLHASL (137 aa)) enclose the MGS-like domain. An allosteric domain region spans residues 945 to 1081 (SRLPEKGTVL…YDLQGLHASL (137 aa)).

It belongs to the CarB family. As to quaternary structure, composed of two chains; the small (or glutamine) chain promotes the hydrolysis of glutamine to ammonia, which is used by the large (or ammonia) chain to synthesize carbamoyl phosphate. Tetramer of heterodimers (alpha,beta)4. The cofactor is Mg(2+). Requires Mn(2+) as cofactor.

It carries out the reaction hydrogencarbonate + L-glutamine + 2 ATP + H2O = carbamoyl phosphate + L-glutamate + 2 ADP + phosphate + 2 H(+). The catalysed reaction is hydrogencarbonate + NH4(+) + 2 ATP = carbamoyl phosphate + 2 ADP + phosphate + 2 H(+). Its pathway is amino-acid biosynthesis; L-arginine biosynthesis; carbamoyl phosphate from bicarbonate: step 1/1. The protein operates within pyrimidine metabolism; UMP biosynthesis via de novo pathway; (S)-dihydroorotate from bicarbonate: step 1/3. In terms of biological role, large subunit of the glutamine-dependent carbamoyl phosphate synthetase (CPSase). CPSase catalyzes the formation of carbamoyl phosphate from the ammonia moiety of glutamine, carbonate, and phosphate donated by ATP, constituting the first step of 2 biosynthetic pathways, one leading to arginine and/or urea and the other to pyrimidine nucleotides. The large subunit (synthetase) binds the substrates ammonia (free or transferred from glutamine from the small subunit), hydrogencarbonate and ATP and carries out an ATP-coupled ligase reaction, activating hydrogencarbonate by forming carboxy phosphate which reacts with ammonia to form carbamoyl phosphate. The chain is Carbamoyl phosphate synthase large chain from Ralstonia nicotianae (strain ATCC BAA-1114 / GMI1000) (Ralstonia solanacearum).